A 308-amino-acid chain; its full sequence is MYYASTCMDHEIVEKKYKLGLNVTDNYKVRYNISLISQIFEGRCDYKNVVRLSLPKSLDLYKTGSNHYAYTLEVNMINVEKIYKLDNFEDVKELIDLGADINEAIKNIIIVNNIDSLKYLLEKGANIDLIDSYLAKMGNIDIFEFLFVKKCPMNKFLPIAVEYGHLNLVKFLVEKGVYVDFIDRTKYTFSEYTPLVAACSAGHIKIVEYLIEKGANYKSSYGVYLAAEKGHYDIVKFLIDKGTDLEKYGLRSLNEVIKKGHFDIMKLFINSGLEIDYDYYIYKAGLRGHTDIVKYLVMMQMSKQIQKI.

ANK repeat units follow at residues 100–129 (DINEAIKNIIIVNNIDSLKYLLEKGANIDL), 152–181 (PMNKFLPIAVEYGHLNLVKFLVEKGVYVDF), 190–217 (SEYTPLVAACSAGHIKIVEYLIEKGANY), 218–247 (KSSYGVYLAAEKGHYDIVKFLIDKGTDLEK), 249–277 (GLRSLNEVIKKGHFDIMKLFINSGLEIDY), and 279–305 (YYIYKAGLRGHTDIVKYLVMMQMSKQI).

The chain is Putative ankyrin repeat protein R835 from Acanthamoeba polyphaga (Amoeba).